Here is a 181-residue protein sequence, read N- to C-terminus: tRNA-splicing endonuclease (181 aa).

Catalysis depends on residues Tyr118, His126, and Lys157.

Belongs to the tRNA-intron endonuclease family. Archaeal short subfamily. Homotetramer; although the tetramer contains four active sites, only two participate in the cleavage. Therefore, it should be considered as a dimer of dimers.

It carries out the reaction pretRNA = a 3'-half-tRNA molecule with a 5'-OH end + a 5'-half-tRNA molecule with a 2',3'-cyclic phosphate end + an intron with a 2',3'-cyclic phosphate and a 5'-hydroxyl terminus.. Its function is as follows. Endonuclease that removes tRNA introns. Cleaves pre-tRNA at the 5'- and 3'-splice sites to release the intron. The products are an intron and two tRNA half-molecules bearing 2',3' cyclic phosphate and 5'-OH termini. Recognizes a pseudosymmetric substrate in which 2 bulged loops of 3 bases are separated by a stem of 4 bp. The chain is tRNA-splicing endonuclease from Sulfolobus acidocaldarius (strain ATCC 33909 / DSM 639 / JCM 8929 / NBRC 15157 / NCIMB 11770).